Here is a 309-residue protein sequence, read N- to C-terminus: MDALKSAGRAIIRSPSIAKQSWGGGKHKKLPENWTDTRETLLEGMLFHLKYLGMTLVEQPKGEELSATAVKRIVATAKASGKKLQKVILKVSPRGIILYDSTSNQLIENVSIYRISYCTADKMHDKVFAYIAQSQQNETLECHAFLCTKRKMAQAVTLTVAQAFKVAFEFWQVSRDKTEKREKSGSGGEGASSSQSDGSSSITSLKASASANLLDLEDCTKAFDVLNASDNHIEDLFRQNASNENNNIVWELDDGLDEAFARLAESRTNPQVLDIGLTANDLQSEECLSPSSWDKLELNPAEADELFMF.

Residues 41 to 195 (LLEGMLFHLK…SGGEGASSSQ (155 aa)) enclose the PID domain. Residues 179 to 199 (EKREKSGSGGEGASSSQSDGS) are disordered. Positions 213-217 (LLDLE) match the Clathrin box motif. The segment at 250–277 (WELDDGLDEAFARLAESRTNPQVLDIGL) is AP-2 complex binding. A [DE]-X(1,2)-F-X-X-[FL]-X-X-X-R motif motif is present at residues 258-267 (EAFARLAESR).

Interacts (via PID domain) with ldlr (via NPXY motif). Binds to soluble clathrin trimers and to the adapter protein complex 2 (AP-2, beta 2 subunit). Binds to phosphoinositides, which regulate clathrin bud assembly at the cell surface. Interacts with the VLDL receptor (vldlr). Interacts with the vitellogenin receptor. In terms of tissue distribution, expressed at high level during oogenesis and embryogenesis. Found in the oocyte vegetal cortex. Found at low level in the adult liver and spleen. Found at very low level in testis and heart.

It is found in the cytoplasm. In terms of biological role, adapter protein (clathrin-associated sorting protein (CLASP)) required for efficient endocytosis of the LDL receptor (LDLR). Also involved in the vitellogenin receptor mediated endocytosis of nutrients during oogenesis. This chain is Low density lipoprotein receptor adapter protein 1-A, found in Xenopus laevis (African clawed frog).